The primary structure comprises 335 residues: Malate dehydrogenase (335 aa).

11–17 (GAAGQIG) serves as a coordination point for NAD(+). Residues arginine 94 and arginine 100 each coordinate substrate. NAD(+) is bound by residues asparagine 107, glutamine 114, and 131-133 (VGN). 2 residues coordinate substrate: asparagine 133 and arginine 167. Catalysis depends on histidine 192, which acts as the Proton acceptor.

Belongs to the LDH/MDH superfamily. MDH type 2 family.

It catalyses the reaction (S)-malate + NAD(+) = oxaloacetate + NADH + H(+). Its function is as follows. Catalyzes the reversible oxidation of malate to oxaloacetate. The protein is Malate dehydrogenase of Bdellovibrio bacteriovorus (strain ATCC 15356 / DSM 50701 / NCIMB 9529 / HD100).